A 63-amino-acid polypeptide reads, in one-letter code: Adipokinetic prohormone type 1 (63 aa).

An N-terminal signal peptide occupies residues 1–22; the sequence is MVQRCLVVALLVVVVAAALCSA. Gln23 carries the pyrrolidone carboxylic acid modification. Thr32 is subject to Threonine amide.

This sequence belongs to the AKH/HRTH/RPCH family. In terms of assembly, adipokinetic hormone precursor-related peptide (APRP) can form three type of disulfide-bond dimers: p1 (alpha-alpha), p2 (alpha-beta), and p3 (beta-beta).

The protein resides in the secreted. This hormone, released from cells in the corpora cardiaca, causes release of diglycerides from the fat body and stimulation of muscles to use these diglycerides as an energy source during energy-demanding processes. This chain is Adipokinetic prohormone type 1, found in Schistocerca nitens (Vagrant locust).